A 455-amino-acid polypeptide reads, in one-letter code: Argininosuccinate lyase (455 aa).

The protein belongs to the lyase 1 family. Argininosuccinate lyase subfamily.

Its subcellular location is the cytoplasm. The enzyme catalyses 2-(N(omega)-L-arginino)succinate = fumarate + L-arginine. The protein operates within amino-acid biosynthesis; L-arginine biosynthesis; L-arginine from L-ornithine and carbamoyl phosphate: step 3/3. The protein is Argininosuccinate lyase of Caulobacter vibrioides (strain ATCC 19089 / CIP 103742 / CB 15) (Caulobacter crescentus).